We begin with the raw amino-acid sequence, 451 residues long: Serine--tRNA ligase (451 aa).

An L-serine-binding site is contributed by 258–260; sequence TSE. 289–291 serves as a coordination point for ATP; sequence RSE. Residue Glu-312 participates in L-serine binding. Residue 376-379 participates in ATP binding; that stretch reads EISS. Ser-411 is a binding site for L-serine.

Belongs to the class-II aminoacyl-tRNA synthetase family. Type-1 seryl-tRNA synthetase subfamily. Homodimer. The tRNA molecule binds across the dimer.

It is found in the cytoplasm. It carries out the reaction tRNA(Ser) + L-serine + ATP = L-seryl-tRNA(Ser) + AMP + diphosphate + H(+). The enzyme catalyses tRNA(Sec) + L-serine + ATP = L-seryl-tRNA(Sec) + AMP + diphosphate + H(+). The protein operates within aminoacyl-tRNA biosynthesis; selenocysteinyl-tRNA(Sec) biosynthesis; L-seryl-tRNA(Sec) from L-serine and tRNA(Sec): step 1/1. Its function is as follows. Catalyzes the attachment of serine to tRNA(Ser). Is also able to aminoacylate tRNA(Sec) with serine, to form the misacylated tRNA L-seryl-tRNA(Sec), which will be further converted into selenocysteinyl-tRNA(Sec). This is Serine--tRNA ligase from Bordetella pertussis (strain Tohama I / ATCC BAA-589 / NCTC 13251).